The sequence spans 346 residues: Elongation factor Ts (346 aa).

Residues 80–83 (TDFV) form an involved in Mg(2+) ion dislocation from EF-Tu region.

Belongs to the EF-Ts family.

It is found in the cytoplasm. Functionally, associates with the EF-Tu.GDP complex and induces the exchange of GDP to GTP. It remains bound to the aminoacyl-tRNA.EF-Tu.GTP complex up to the GTP hydrolysis stage on the ribosome. The protein is Elongation factor Ts of Streptococcus suis (strain 98HAH33).